Reading from the N-terminus, the 350-residue chain is tRNA pseudouridine synthase D (350 aa).

Catalysis depends on Asp-85, which acts as the Nucleophile. The TRUD domain maps to 160 to 310 (GVINYFGEQR…EAARRTILLR (151 aa)).

The protein belongs to the pseudouridine synthase TruD family.

It carries out the reaction uridine(13) in tRNA = pseudouridine(13) in tRNA. Functionally, responsible for synthesis of pseudouridine from uracil-13 in transfer RNAs. The protein is tRNA pseudouridine synthase D of Idiomarina loihiensis (strain ATCC BAA-735 / DSM 15497 / L2-TR).